The primary structure comprises 357 residues: uncharacterized protein (357 aa).

3 consecutive transmembrane segments (helical) span residues 21 to 41 (FIKI…LFSW), 86 to 106 (FFCL…CTLF), and 135 to 155 (GGFV…PVIF). 2 disordered regions span residues 184–229 (DKNK…AMSD) and 283–357 (KAGS…NKRN). Low complexity predominate over residues 195–223 (TTNTTNFSGNGSSSSTTNATSSSSSQANN). Basic and acidic residues-rich tracts occupy residues 305 to 314 (KIEEYDNQKQ) and 322 to 337 (KETN…EKET). Positions 305–337 (KIEEYDNQKQEEEENEEKETNKQQTQKDDEKET) form a coiled coil. Residues 346–357 (KKSKKGKKNKRN) show a composition bias toward basic residues.

It is found in the membrane. This is an uncharacterized protein from Dictyostelium discoideum (Social amoeba).